A 249-amino-acid chain; its full sequence is Aspartate/glutamate leucyltransferase (249 aa).

This sequence belongs to the R-transferase family. Bpt subfamily.

It localises to the cytoplasm. The enzyme catalyses N-terminal L-glutamyl-[protein] + L-leucyl-tRNA(Leu) = N-terminal L-leucyl-L-glutamyl-[protein] + tRNA(Leu) + H(+). It catalyses the reaction N-terminal L-aspartyl-[protein] + L-leucyl-tRNA(Leu) = N-terminal L-leucyl-L-aspartyl-[protein] + tRNA(Leu) + H(+). Functions in the N-end rule pathway of protein degradation where it conjugates Leu from its aminoacyl-tRNA to the N-termini of proteins containing an N-terminal aspartate or glutamate. The chain is Aspartate/glutamate leucyltransferase from Brucella anthropi (strain ATCC 49188 / DSM 6882 / CCUG 24695 / JCM 21032 / LMG 3331 / NBRC 15819 / NCTC 12168 / Alc 37) (Ochrobactrum anthropi).